Reading from the N-terminus, the 236-residue chain is Small ribosomal subunit protein uS5 (236 aa).

The S5 DRBM domain occupies 61-124; the sequence is ENQEILDIAL…NYAKLNIIEI (64 aa).

The protein belongs to the universal ribosomal protein uS5 family. In terms of assembly, part of the 30S ribosomal subunit. Contacts protein S4.

Functionally, with S4 and S12 plays an important role in translational accuracy. The sequence is that of Small ribosomal subunit protein uS5 from Pyrococcus abyssi (strain GE5 / Orsay).